Consider the following 538-residue polypeptide: Syncytin-1 (538 aa).

Positions M1–T20 are cleaved as a signal peptide. The Extracellular portion of the chain corresponds to S31 to Q443. N169 is a glycosylation site (N-linked (GlcNAc...) asparagine). Positions C186–C189 match the CXXC motif. Cystine bridges form between C186-C189, C186-C405, and C397-C404. N-linked (GlcNAc...) asparagine glycosylation is found at N208, N214, N234, N242, and N281. The tract at residues I320 to I340 is fusion peptide. The interval L380–T396 is immunosuppression. The short motif at C397–C405 is the CX6CC element. N409 is a glycosylation site (N-linked (GlcNAc...) asparagine). The helical transmembrane segment at W444–F464 threads the bilayer. The essential for the fusiogenic function stretch occupies residues G465–K484. Residues G465–S538 are Cytoplasmic-facing. Residues K494–S538 form a disordered region.

Belongs to the gamma type-C retroviral envelope protein family. HERV class-I W env subfamily. As to quaternary structure, the mature envelope protein (Env) consists of a trimer of SU-TM heterodimers attached probably by a labile interchain disulfide bond. Interacts with the C-type lectin CD209/DC-SIGN. Specific enzymatic cleavages in vivo yield mature proteins. Envelope glycoproteins are synthesized as an inactive precursor that is heavily N-glycosylated and processed likely by furin in the Golgi to yield the mature SU and TM proteins. The cleavage site between SU and TM requires the minimal sequence [KR]-X-[KR]-R. Post-translationally, the CXXC motif is highly conserved across a broad range of retroviral envelope proteins. It is thought to participate in the formation of a labile disulfide bond possibly with the CX6CC motif present in the transmembrane protein.

The protein resides in the cell membrane. It localises to the virion. In terms of biological role, this endogenous retroviral envelope protein has retained its original fusogenic properties and participates in trophoblast fusion and the formation of a syncytium during placenta morphogenesis. May recognize and induce fusion through binding of SLC1A4 and SLC1A5. Its function is as follows. Endogenous envelope proteins may have kept, lost or modified their original function during evolution. Retroviral envelope proteins mediate receptor recognition and membrane fusion during early infection. The surface protein (SU) mediates receptor recognition, while the transmembrane protein (TM) acts as a class I viral fusion protein. The protein may have at least 3 conformational states: pre-fusion native state, pre-hairpin intermediate state, and post-fusion hairpin state. During viral and target cell membrane fusion, the coiled coil regions (heptad repeats) assume a trimer-of-hairpins structure, positioning the fusion peptide in close proximity to the C-terminal region of the ectodomain. The formation of this structure appears to drive apposition and subsequent fusion of membranes. The sequence is that of Syncytin-1 (ERVW-1) from Hylobates pileatus (Pileated gibbon).